A 1342-amino-acid polypeptide reads, in one-letter code: DNA-directed RNA polymerase subunit beta (1342 aa).

2 positions are modified to N6-acetyllysine: Lys-1022 and Lys-1200.

Belongs to the RNA polymerase beta chain family. In terms of assembly, the RNAP catalytic core consists of 2 alpha, 1 beta, 1 beta' and 1 omega subunit. When a sigma factor is associated with the core the holoenzyme is formed, which can initiate transcription.

The enzyme catalyses RNA(n) + a ribonucleoside 5'-triphosphate = RNA(n+1) + diphosphate. Its function is as follows. DNA-dependent RNA polymerase catalyzes the transcription of DNA into RNA using the four ribonucleoside triphosphates as substrates. The polypeptide is DNA-directed RNA polymerase subunit beta (Shigella dysenteriae serotype 1 (strain Sd197)).